Reading from the N-terminus, the 898-residue chain is Netrin receptor UNC5A (898 aa).

A signal peptide spans 1 to 25 (MAVRPGLWPVLLGIVLAAWLRGSGA). Residues 26-361 (QQSATVANPV…TASCPEDVAL (336 aa)) lie on the Extracellular side of the membrane. An Ig-like domain is found at 44-141 (PHFLVEPEDV…SGTTKSQKAY (98 aa)). Disulfide bonds link Cys-65-Cys-126, Cys-77-Cys-124, and Cys-170-Cys-221. Asn-107 and Asn-218 each carry an N-linked (GlcNAc...) asparagine glycan. One can recognise an Ig-like C2-type domain in the interval 155–238 (PLAKEVSLEQ…RRRSTSAAVI (84 aa)). TSP type-1 domains lie at 242-296 (NGGW…TLCP) and 298-350 (DGSW…DLCL). Residues Trp-245, Trp-248, and Trp-251 are each glycosylated (C-linked (Man) tryptophan). Intrachain disulfides connect Cys-254-Cys-291, Cys-258-Cys-295, and Cys-269-Cys-281. Trp-301 and Trp-304 each carry a C-linked (Man) tryptophan glycan. 3 disulfides stabilise this stretch: Cys-310–Cys-344, Cys-314–Cys-349, and Cys-322–Cys-334. The N-linked (GlcNAc...) asparagine glycan is linked to Asn-343. Residues 362–382 (YIGLVAVAVCLFLLLLALGLI) traverse the membrane as a helical segment. At 383 to 898 (YCRKKEGLDS…GLFTVSEAEC (516 aa)) the chain is on the cytoplasmic side. The 144-residue stretch at 497–640 (NMAYGTFNFL…LGRFALVGEA (144 aa)) folds into the ZU5 domain. The interval 661-679 (SLEYNIRVYCLHDTHDALK) is interaction with DCC. The Death domain occupies 817–897 (QKIIASLDPP…AGLFTVSEAE (81 aa)).

Belongs to the unc-5 family. Homodimer and homooligomer. Interacts with the cytoplasmic part of DCC. Interacts with MAGED1. Interacts with PRKCABP, possibly mediating some interaction with PKC. Interacts (via extracellular domain) with FLRT2 (via extracellular domain). Interacts (via extracellular domain) with FLRT3 (via extracellular domain). Phosphorylated on cytoplasmic tyrosine residues. Phosphorylated by PKC in vitro. In terms of processing, proteolytically cleaved by caspases during apoptosis. The cleavage does not take place when the receptor is associated with netrin ligand. Its cleavage by caspases is required to induce apoptosis. Post-translationally, the two extracellular TSRs of UNC5A contain WxxWxxWxxC motifs that can be C-mannosylated on all tryptophans. DPY19L1 preferentially mannosylates the first two tryptophans and DPY19L3 prefers the third. C-mannosylation by DPY19L1 is required for transport of UNC5A from the endoplasmic reticulum to the cell surface. In terms of tissue distribution, mainly expressed in regions of differentiating neurons. Expressed at early stages of neural tube development in the ventral spinal cord. In developing hindbrain, it colocalizes with a number of cranial motor neuron subpopulations from embryonic E11 to E14, while DCC is expressed by motor neurons at E12. Also expressed in non-neural structures, such as the basal plane of the hindbrain and midbrain, in the developing hypothalamus, thalamus and in the pallidum.

It is found in the cell membrane. The protein localises to the membrane raft. The protein resides in the cell projection. It localises to the neuron projection. Functionally, receptor for netrin required for axon guidance. Functions in the netrin signaling pathway and promotes neurite outgrowth in response to NTN1. Mediates axon repulsion of neuronal growth cones in the developing nervous system in response to netrin. Axon repulsion in growth cones may be mediated by its association with DCC that may trigger signaling for repulsion. It also acts as a dependence receptor required for apoptosis induction when not associated with netrin ligand. This chain is Netrin receptor UNC5A (Unc5a), found in Rattus norvegicus (Rat).